A 305-amino-acid polypeptide reads, in one-letter code: MADFKPRIEISFLETFICSAFAACFAELCTIPLDTAKVRLQLQRKIPTGDGENLPKYRGSIGTLATIAREEGISGLWKGVIAGLHRQCIYGGLRIGLYEPVKTLLVGSDFIGDIPLYQKILAALLTGAIAIIVANPTDLVKVRLQSEGKLPAGVPRRYAGAVDAYFTIVKLEGVSALWTGLGPNIARNAIVNAAELASYDQIKETIMKIPFFRDSVLTHLLAGLAAGFFAVCIGSPIDVVKSRMMGDSTYRNTVDCFIKTMKTEGIMAFYKGFLPNFTRLGTWNAIMFLTLEQVKKVFLREVLYD.

Solcar repeat units lie at residues 10–104 (ISFL…VKTL), 114–205 (IPLY…IKET), and 214–297 (DSVL…VKKV). 6 helical membrane passes run 16 to 36 (FICS…LDTA), 73 to 93 (ISGL…YGGL), 120 to 140 (ILAA…TDLV), 179 to 199 (TGLG…LASY), 220 to 240 (LLAG…IDVV), and 270 to 290 (YKGF…MFLT).

The protein belongs to the mitochondrial carrier (TC 2.A.29) family.

The protein localises to the mitochondrion inner membrane. Its function is as follows. PUMPS are mitochondrial transporter proteins that create proton leaks across the inner mitochondrial membrane, thus uncoupling oxidative phosphorylation. This leads to a decrease in the efficiency of oxidative phosphorylation and an increase in heat production. May be involved in protecting plant cells against oxidative stress damage. This is Mitochondrial uncoupling protein 2 (PUMP2) from Arabidopsis thaliana (Mouse-ear cress).